Here is a 65-residue protein sequence, read N- to C-terminus: Large ribosomal subunit protein bL35 (65 aa).

The tract at residues 1-40 (MPKMKTNSGSKKRFALTGTGKIKRKHAFHSHILTKKSKKR) is disordered. The segment covering 21 to 40 (KIKRKHAFHSHILTKKSKKR) has biased composition (basic residues).

This sequence belongs to the bacterial ribosomal protein bL35 family.

This Bacteroides fragilis (strain ATCC 25285 / DSM 2151 / CCUG 4856 / JCM 11019 / LMG 10263 / NCTC 9343 / Onslow / VPI 2553 / EN-2) protein is Large ribosomal subunit protein bL35.